The sequence spans 290 residues: HTH-type transcriptional activator RhaR (290 aa).

Residues 179 to 277 (DLIMSALQQS…GMTPRDYRQR (99 aa)) enclose the HTH araC/xylS-type domain. DNA-binding regions (H-T-H motif) lie at residues 196–217 (ANFC…RQQT) and 244–267 (ISDI…TREA).

Binds DNA as a dimer.

Its subcellular location is the cytoplasm. Activates expression of the rhaSR operon in response to L-rhamnose. This is HTH-type transcriptional activator RhaR from Yersinia pseudotuberculosis serotype O:3 (strain YPIII).